The following is a 393-amino-acid chain: S-adenosylmethionine synthase 2 (393 aa).

Glu-9 is a binding site for Mg(2+). His-15 lines the ATP pocket. Glu-43 contributes to the K(+) binding site. L-methionine is bound by residues Glu-56 and Gln-99. ATP-binding positions include 167–169 (DGK), 235–238 (SGRF), Asp-246, 252–253 (RK), Ala-269, Lys-273, and Lys-277. Asp-246 is an L-methionine binding site. Lys-277 provides a ligand contact to L-methionine.

This sequence belongs to the AdoMet synthase family. In terms of assembly, homotetramer. It depends on Mn(2+) as a cofactor. Requires Mg(2+) as cofactor. Co(2+) is required as a cofactor. The cofactor is K(+). As to expression, roots and shoots.

It is found in the cytoplasm. The catalysed reaction is L-methionine + ATP + H2O = S-adenosyl-L-methionine + phosphate + diphosphate. It functions in the pathway amino-acid biosynthesis; S-adenosyl-L-methionine biosynthesis; S-adenosyl-L-methionine from L-methionine: step 1/1. Functionally, catalyzes the formation of S-adenosylmethionine from methionine and ATP. The reaction comprises two steps that are both catalyzed by the same enzyme: formation of S-adenosylmethionine (AdoMet) and triphosphate, and subsequent hydrolysis of the triphosphate. This Pinus contorta (Shore pine) protein is S-adenosylmethionine synthase 2 (SAMS2).